The following is a 417-amino-acid chain: uncharacterized protein (417 aa).

Residues 1–24 (MSQPPINPLGQPQVPAAASPSGQP) are disordered. Helical transmembrane passes span 54-74 (VYDTGIIALAAIAILSILLTA), 79-99 (LMLYALAPALALGALGVTLLI), 117-137 (AIVVPIIVLAIAAGLIAGAFV), and 143-163 (MLVFANPMFVMGLITVGLYFM). Positions 211-228 (DLSASARMEEHEASQRQD) are enriched in basic and acidic residues. 2 disordered regions span residues 211–283 (DLSA…FKDD) and 308–417 (IMPA…RKNK). The segment covering 312–322 (SSRSPNFSTGT) has biased composition (polar residues). Residues 336-347 (EPSIPRVSSSSR) are compositionally biased toward low complexity. Over residues 391-401 (STANLSPSNPF) the composition is skewed to polar residues.

This sequence belongs to the chlamydial CPn_0443/CT_005/TC_0273 family.

Its subcellular location is the cell membrane. This is an uncharacterized protein from Chlamydia pneumoniae (Chlamydophila pneumoniae).